A 489-amino-acid polypeptide reads, in one-letter code: Glycogen synthase (489 aa).

Lysine 15 lines the ADP-alpha-D-glucose pocket.

It belongs to the glycosyltransferase 1 family. Bacterial/plant glycogen synthase subfamily.

The enzyme catalyses [(1-&gt;4)-alpha-D-glucosyl](n) + ADP-alpha-D-glucose = [(1-&gt;4)-alpha-D-glucosyl](n+1) + ADP + H(+). It functions in the pathway glycan biosynthesis; glycogen biosynthesis. In terms of biological role, synthesizes alpha-1,4-glucan chains using ADP-glucose. The sequence is that of Glycogen synthase from Francisella tularensis subsp. novicida (strain U112).